Consider the following 152-residue polypeptide: uncharacterized protein (152 aa).

The VOC domain occupies 7-133 (PALSPHLVVD…FGHHWSLGQP (127 aa)).

This is an uncharacterized protein from Mycobacterium bovis (strain ATCC BAA-935 / AF2122/97).